Here is a 296-residue protein sequence, read N- to C-terminus: Ribosomal protein L11 methyltransferase (296 aa).

S-adenosyl-L-methionine contacts are provided by threonine 147, glycine 168, aspartate 190, and asparagine 232.

Belongs to the methyltransferase superfamily. PrmA family.

Its subcellular location is the cytoplasm. It carries out the reaction L-lysyl-[protein] + 3 S-adenosyl-L-methionine = N(6),N(6),N(6)-trimethyl-L-lysyl-[protein] + 3 S-adenosyl-L-homocysteine + 3 H(+). Functionally, methylates ribosomal protein L11. The chain is Ribosomal protein L11 methyltransferase from Marinomonas sp. (strain MWYL1).